The following is a 451-amino-acid chain: 23S rRNA (uracil(1939)-C(5))-methyltransferase RlmD (451 aa).

The segment at 1–21 (MAKHERGLRFQPTGGVKSVQI) is disordered. The TRAM domain occupies 20–78 (QIPAGKKQRLSIERLSDDGRGIAFLEGKTWFVAGSLAGEEVEARVLNARGKVVEARTER). Cys-91, Cys-97, Cys-100, and Cys-179 together coordinate [4Fe-4S] cluster. Gln-283, Phe-312, Asn-317, Glu-333, Asp-360, and Asp-381 together coordinate S-adenosyl-L-methionine. The Nucleophile role is filled by Cys-407.

It belongs to the class I-like SAM-binding methyltransferase superfamily. RNA M5U methyltransferase family. RlmD subfamily.

It catalyses the reaction uridine(1939) in 23S rRNA + S-adenosyl-L-methionine = 5-methyluridine(1939) in 23S rRNA + S-adenosyl-L-homocysteine + H(+). Catalyzes the formation of 5-methyl-uridine at position 1939 (m5U1939) in 23S rRNA. This chain is 23S rRNA (uracil(1939)-C(5))-methyltransferase RlmD, found in Pseudomonas syringae pv. tomato (strain ATCC BAA-871 / DC3000).